The chain runs to 99 residues: MAHLSLNQYKCTHIIIHGTCLSGLYPVPFTHNAHDYPHFNIYISFGGPKYCKTALNTYVIPLLHRILTTQFIYTYANITEKSPPKSPKHKNILSFNNNT.

Residues 80 to 99 (EKSPPKSPKHKNILSFNNNT) form a disordered region.

This sequence belongs to the UPF0320 family.

This chain is Putative UPF0320 protein YDR543C, found in Saccharomyces cerevisiae (strain ATCC 204508 / S288c) (Baker's yeast).